A 215-amino-acid chain; its full sequence is LysM and putative peptidoglycan-binding domain-containing protein 2 (215 aa).

The disordered stretch occupies residues Met-1–Glu-40. Residue Ala-2 is modified to N-acetylalanine. Phosphoserine is present on residues Ser-5, Ser-24, Ser-34, and Ser-58. The span at Pro-20 to His-29 shows a compositional bias: pro residues. Positions Val-72–Ile-116 constitute a LysM domain. Residues Ala-194–Ser-215 are disordered.

The sequence is that of LysM and putative peptidoglycan-binding domain-containing protein 2 (LYSMD2) from Bos taurus (Bovine).